The primary structure comprises 359 residues: Probable mannitol dehydrogenase (359 aa).

Positions 48, 70, 101, 104, 107, 115, and 164 each coordinate Zn(2+).

Belongs to the zinc-containing alcohol dehydrogenase family. It depends on Zn(2+) as a cofactor.

The catalysed reaction is D-mannitol + NAD(+) = D-mannose + NADH + H(+). Its function is as follows. Oxidizes mannitol to mannose. Provides the initial step by which translocated mannitol is committed to central metabolism and, by regulating mannitol pool size, is important in regulating salt tolerance at the cellular level. The polypeptide is Probable mannitol dehydrogenase (CAD) (Fragaria ananassa (Strawberry)).